The primary structure comprises 950 residues: Bifunctional glutamine synthetase adenylyltransferase/adenylyl-removing enzyme (950 aa).

The tract at residues 1–440 is adenylyl removase; sequence MLPLPSELQI…VFDHLIGDDA (440 aa). An adenylyl transferase region spans residues 449–950; that stretch reads HGLYKSLWQD…KWLVAAPSDV (502 aa).

This sequence belongs to the GlnE family. Mg(2+) serves as cofactor.

The catalysed reaction is [glutamine synthetase]-O(4)-(5'-adenylyl)-L-tyrosine + phosphate = [glutamine synthetase]-L-tyrosine + ADP. It catalyses the reaction [glutamine synthetase]-L-tyrosine + ATP = [glutamine synthetase]-O(4)-(5'-adenylyl)-L-tyrosine + diphosphate. Its function is as follows. Involved in the regulation of glutamine synthetase GlnA, a key enzyme in the process to assimilate ammonia. When cellular nitrogen levels are high, the C-terminal adenylyl transferase (AT) inactivates GlnA by covalent transfer of an adenylyl group from ATP to specific tyrosine residue of GlnA, thus reducing its activity. Conversely, when nitrogen levels are low, the N-terminal adenylyl removase (AR) activates GlnA by removing the adenylyl group by phosphorolysis, increasing its activity. The regulatory region of GlnE binds the signal transduction protein PII (GlnB) which indicates the nitrogen status of the cell. The protein is Bifunctional glutamine synthetase adenylyltransferase/adenylyl-removing enzyme of Yersinia enterocolitica serotype O:8 / biotype 1B (strain NCTC 13174 / 8081).